The following is a 606-amino-acid chain: Gastrula zinc finger protein XlCGF66.1 (606 aa).

2 disordered regions span residues 1-31 (MGMW…RGKK) and 240-271 (TLHS…KRQK). The segment covering 242-262 (HSKDSCNEGHKHLSHKSDYNK) has biased composition (basic and acidic residues). 11 consecutive C2H2-type zinc fingers follow at residues 273–295 (FSCS…QKTH), 300–322 (LLCL…RQTH), 328–350 (FSCS…QITH), 384–407 (DFCS…QQVH), 413–435 (FSCT…QRTH), 441–464 (YSCS…QQVH), 470–492 (FFCS…QRTH), 498–521 (YSCS…QQVH), 527–549 (FSCS…QRTH), 555–578 (DFCF…QQVH), and 584–606 (FSCS…HRTH).

It belongs to the krueppel C2H2-type zinc-finger protein family.

It localises to the nucleus. Its function is as follows. May be involved in transcriptional regulation. This chain is Gastrula zinc finger protein XlCGF66.1, found in Xenopus laevis (African clawed frog).